Reading from the N-terminus, the 1311-residue chain is Zinc finger protein 521 (1311 aa).

Residues 47–67 form a C2H2-type 1; degenerate zinc finger; the sequence is HSCDSCLQVFESLSDITEHKI. Residues 81–108 are disordered; it reads DPSCSWPASSPSSKDQTSPSHGEGCDFG. Over residues 83–102 the composition is skewed to low complexity; the sequence is SCSWPASSPSSKDQTSPSHG. 7 consecutive C2H2-type zinc fingers follow at residues 118-140, 146-168, 174-196, 202-224, 246-269, 281-304, and 310-332; these read YPCQ…EQSH, FKCT…IKLH, YHCS…LKTH, YKCA…MQVH, QKCS…AECH, LQCM…EQVH, and NSCS…MDSH. The disordered stretch occupies residues 357–398; it reads TTPDSNLSVDSSTMVEAAPPIPKSRGRKRAAQQTSDMTGPSS. 2 stretches are compositionally biased toward polar residues: residues 359 to 370 and 387 to 398; these read PDSNLSVDSSTM and AQQTSDMTGPSS. The C2H2-type 9; degenerate zinc finger occupies 405 to 429; the sequence is YSCIYCNKQLFSSLAVLQIHLKTMH. 3 consecutive C2H2-type zinc fingers follow at residues 437–460, 477–500, and 513–536; these read HICQ…KQVH, YQCN…RCSH, and FFCP…RQVH. Ser-546 is subject to Phosphoserine. The C2H2-type 13; atypical zinc-finger motif lies at 560-585; the sequence is YSCSYCTNSPIFNSVLKLNKHIKENH. 2 positions are modified to phosphoserine: Ser-605 and Ser-608. 7 consecutive C2H2-type zinc fingers follow at residues 634 to 656, 664 to 686, 694 to 717, 722 to 745, 752 to 775, 783 to 805, and 809 to 832; these read YICN…LKTH, LTCP…VTIH, YICE…LDMH, FRCT…AVKH, YRCT…KHNH, HKCI…ITTH, and YNCR…REKH. The interval 863-883 is disordered; the sequence is TNSQESHNSHDGSEEDVDSSE. The C2H2-type 21; degenerate zinc finger occupies 886–908; the sequence is YGCDICGAAYTMETLLQNHQLRD. 3 consecutive C2H2-type zinc fingers follow at residues 930–952, 959–981, and 1020–1042; these read YKCN…MQTH, YMCP…KVTH, and FRCV…GTFH. The C2H2-type 25; degenerate zinc finger occupies 1065–1083; the sequence is YKCASCLKEFRSKQDLVKL. Positions 1105-1119 are enriched in low complexity; sequence PGLSLPPGASRPGLG. The interval 1105–1136 is disordered; it reads PGLSLPPGASRPGLGQNESLSAMEGKGKAGGL. C2H2-type zinc fingers lie at residues 1138–1161, 1195–1217, 1225–1247, 1256–1279, and 1286–1309; these read TRCS…QTVH, YQCI…VANH, HECK…LIEH, FKCP…FSAH, and YDCT…MTQH. Residue Lys-1146 forms a Glycyl lysine isopeptide (Lys-Gly) (interchain with G-Cter in SUMO2) linkage.

The protein belongs to the krueppel C2H2-type zinc-finger protein family. Interacts with EBF1. Interacts with SMAD1 and SMAD4. In terms of tissue distribution, widely expressed. Expressed in all B-cell stages.

The protein resides in the nucleus. Transcription factor that can both act as an activator or a repressor depending on the context. Involved in BMP signaling and in the regulation of the immature compartment of the hematopoietic system. Associates with SMADs in response to BMP2 leading to activate transcription of BMP target genes. Acts as a transcriptional repressor via its interaction with EBF1, a transcription factor involved specification of B-cell lineage; this interaction preventing EBF1 to bind DNA and activate target genes. In Mus musculus (Mouse), this protein is Zinc finger protein 521 (Znf521).